We begin with the raw amino-acid sequence, 138 residues long: Ribulose bisphosphate carboxylase small subunit (138 aa).

Belongs to the RuBisCO small chain family. Heterohexadecamer of 8 large and 8 small subunits.

It localises to the plastid. The protein resides in the chloroplast. RuBisCO catalyzes two reactions: the carboxylation of D-ribulose 1,5-bisphosphate, the primary event in carbon dioxide fixation, as well as the oxidative fragmentation of the pentose substrate in the photorespiration process. Both reactions occur simultaneously and in competition at the same active site. Although the small subunit is not catalytic it is essential for maximal activity. The polypeptide is Ribulose bisphosphate carboxylase small subunit (Porphyra purpurea (Red seaweed)).